The sequence spans 379 residues: Sulfate adenylyltransferase (379 aa).

This sequence belongs to the sulfate adenylyltransferase family.

It carries out the reaction sulfate + ATP + H(+) = adenosine 5'-phosphosulfate + diphosphate. The protein operates within sulfur metabolism; hydrogen sulfide biosynthesis; sulfite from sulfate: step 1/3. The protein is Sulfate adenylyltransferase (sat) of Pyrococcus abyssi (strain GE5 / Orsay).